The sequence spans 421 residues: uncharacterized protein (421 aa).

The protein belongs to the glycosyltransferase 28 family.

This is an uncharacterized protein from Mycobacterium leprae (strain TN).